We begin with the raw amino-acid sequence, 178 residues long: N-alpha-acetyltransferase 80 (178 aa).

Residues 26-178 enclose the N-acetyltransferase domain; the sequence is VPIHNYPELM…AKKKYMKKVL (153 aa). Substrate-binding positions include Arg48, 53-56, Asn88, and Ser98; that span reads RMRS. Acetyl-CoA contacts are provided by residues 99 to 101 and 107 to 112; these read VVV and GQGFGK. Position 134 (Ser134) interacts with substrate. Position 138 (Gln138) interacts with acetyl-CoA.

Belongs to the acetyltransferase family.

The catalysed reaction is N-terminal L-aspartyl-L-aspartyl-L-aspartyl-[protein] + acetyl-CoA = N-terminal N-acetyl-L-aspartyl-L-aspartyl-L-aspartyl-[protein] + CoA + H(+). It carries out the reaction N-terminal L-glutamyl-L-glutamyl-L-glutamyl-[protein] + acetyl-CoA = N-terminal N-acetyl-L-glutamyl-L-glutamyl-L-glutamyl-[protein] + CoA + H(+). N-alpha-acetyltransferase that acetylates the amino terminal acidic residue of proteins devoid of initiator methionine. Preferentially acts on proteins starting with Asp-Asp-Asp and Glu-Glu-Glu sequences. In vitro, shows high activity towards N-terminal sequences starting with Met-Asp-Glu-Leu, Met-Glu-Glu-Glu and Met-Asp-Asp-Asp. The sequence is that of N-alpha-acetyltransferase 80 from Drosophila melanogaster (Fruit fly).